We begin with the raw amino-acid sequence, 180 residues long: uncharacterized protein (180 aa).

The N-terminal stretch at 1 to 30 (MRHKIITFILAVVVIIIIGNMIGGGGGSEA) is a signal peptide. Residues 25 to 46 (GGGSEATSKTSSSSKAETEKTY) form a disordered region. The span at 29–39 (EATSKTSSSSK) shows a compositional bias: low complexity.

It is found in the secreted. This is an uncharacterized protein from Bacillus subtilis (strain 168).